Consider the following 118-residue polypeptide: Large ribosomal subunit protein uL18 (118 aa).

The tract at residues 1–25 (MISKPDKNKIRQKRHRRVRGKLSGT) is disordered. A compositionally biased stretch (basic residues) spans 10–20 (IRQKRHRRVRG).

Belongs to the universal ribosomal protein uL18 family. Part of the 50S ribosomal subunit; part of the 5S rRNA/L5/L18/L25 subcomplex. Contacts the 5S and 23S rRNAs.

This is one of the proteins that bind and probably mediate the attachment of the 5S RNA into the large ribosomal subunit, where it forms part of the central protuberance. In Streptococcus pyogenes serotype M5 (strain Manfredo), this protein is Large ribosomal subunit protein uL18.